Here is a 291-residue protein sequence, read N- to C-terminus: Small ribosomal subunit biogenesis GTPase RsgA (291 aa).

Residues 63 to 221 form the CP-type G domain; sequence KNELKRPPVS…IADTPGFSAL (159 aa). GTP-binding positions include 112–115 and 164–172; these read TKKD and GQSGVGKST. The Zn(2+) site is built by Cys-245, Cys-250, His-252, and Cys-258.

The protein belongs to the TRAFAC class YlqF/YawG GTPase family. RsgA subfamily. As to quaternary structure, monomer. Associates with 30S ribosomal subunit, binds 16S rRNA. Zn(2+) serves as cofactor.

It localises to the cytoplasm. In terms of biological role, one of several proteins that assist in the late maturation steps of the functional core of the 30S ribosomal subunit. Helps release RbfA from mature subunits. May play a role in the assembly of ribosomal proteins into the subunit. Circularly permuted GTPase that catalyzes slow GTP hydrolysis, GTPase activity is stimulated by the 30S ribosomal subunit. The sequence is that of Small ribosomal subunit biogenesis GTPase RsgA from Staphylococcus aureus (strain Mu50 / ATCC 700699).